The chain runs to 127 residues: Small ribosomal subunit protein bS6 (127 aa).

Belongs to the bacterial ribosomal protein bS6 family.

Binds together with bS18 to 16S ribosomal RNA. This Acinetobacter baumannii (strain AB0057) protein is Small ribosomal subunit protein bS6.